Reading from the N-terminus, the 478-residue chain is MNSAVEQQLAELGIEAYLKEHQYKSLLRFLTCGSVDDGKSTLIGRLLHDSKQIYADQLDAVHADSQRVGTTGERPDLALLVDGLQAEREQGITIDVAYRYFSTQKRKFIIADTPGHEQYTRNMATGASTCNVAVILIDARKGVLDQTRRHSYIANLLGIRHFIVAVNKMDLVEYSQSRFEEIKEEYLAFSKKLNNPNLDISILPLSALEGDNVVNPSEALSWYQGEPLLEVLENVDIDADKGNGEFRFPVQYVNRPNLDFRGFAGTVSSGGISVGDEIVALPSGKKSKVARIVTFDGDLTSAQAGQAVTLTLEDEIDISRGDLLVKSQSNLQATDQFKAEIVWMTEKGLEPGRQYDIKIAGKKTVGQIDAIHHQVNINSLEKFDTQELPLNGIGLCDVSLTETVSLDRYQDCADTGGFIFIDRLTNVTVGAGMIQNLSDLSETKPINDNISAFEIELNALIRKHFPHWETQDISKLLG.

The tr-type G domain occupies lysine 24–aspartate 240. A G1 region spans residues glycine 33–serine 40. GTP is bound at residue glycine 33–serine 40. The interval glycine 91–aspartate 95 is G2. Positions aspartate 112–glycine 115 are G3. GTP contacts are provided by residues aspartate 112 to histidine 116 and asparagine 167 to aspartate 170. The segment at asparagine 167–aspartate 170 is G4. Residues serine 206–leucine 208 are G5.

The protein belongs to the TRAFAC class translation factor GTPase superfamily. Classic translation factor GTPase family. CysN/NodQ subfamily. In terms of assembly, heterodimer composed of CysD, the smaller subunit, and CysN.

It carries out the reaction sulfate + ATP + H(+) = adenosine 5'-phosphosulfate + diphosphate. It participates in sulfur metabolism; hydrogen sulfide biosynthesis; sulfite from sulfate: step 1/3. Functionally, with CysD forms the ATP sulfurylase (ATPS) that catalyzes the adenylation of sulfate producing adenosine 5'-phosphosulfate (APS) and diphosphate, the first enzymatic step in sulfur assimilation pathway. APS synthesis involves the formation of a high-energy phosphoric-sulfuric acid anhydride bond driven by GTP hydrolysis by CysN coupled to ATP hydrolysis by CysD. The chain is Sulfate adenylyltransferase subunit 1 from Aliivibrio fischeri (strain MJ11) (Vibrio fischeri).